The chain runs to 464 residues: tRNA modification GTPase MnmE (464 aa).

(6S)-5-formyl-5,6,7,8-tetrahydrofolate-binding residues include Arg27, Glu90, and Lys129. One can recognise a TrmE-type G domain in the interval 222–384 (GVTLVLAGSV…LYDRIRSFIA (163 aa)). Residues 232 to 237 (NVGKSS), 251 to 257 (SSYAGTT), and 276 to 279 (DTAG) each bind GTP. Ser236 is a Mg(2+) binding site. A K(+)-binding site is contributed by Ser251. Thr257 is a binding site for Mg(2+). Lys464 serves as a coordination point for (6S)-5-formyl-5,6,7,8-tetrahydrofolate.

It belongs to the TRAFAC class TrmE-Era-EngA-EngB-Septin-like GTPase superfamily. TrmE GTPase family. As to quaternary structure, homodimer. Heterotetramer of two MnmE and two MnmG subunits. K(+) serves as cofactor.

The protein resides in the cytoplasm. Its function is as follows. Exhibits a very high intrinsic GTPase hydrolysis rate. Involved in the addition of a carboxymethylaminomethyl (cmnm) group at the wobble position (U34) of certain tRNAs, forming tRNA-cmnm(5)s(2)U34. The polypeptide is tRNA modification GTPase MnmE (Borrelia recurrentis (strain A1)).